A 158-amino-acid polypeptide reads, in one-letter code: Large ribosomal subunit protein uL15 (158 aa).

Residues 1-13 (MKLNEIKDNEGST) show a composition bias toward basic and acidic residues. Positions 1-45 (MKLNEIKDNEGSTHSRKRLGRGIGSGSGKTGGRGVKGQKSRSGVA) are disordered. The span at 21-35 (RGIGSGSGKTGGRGV) shows a compositional bias: gly residues.

It belongs to the universal ribosomal protein uL15 family. In terms of assembly, part of the 50S ribosomal subunit.

Its function is as follows. Binds to the 23S rRNA. In Rhizobium leguminosarum bv. trifolii (strain WSM2304), this protein is Large ribosomal subunit protein uL15.